Reading from the N-terminus, the 282-residue chain is Tryptophan 2,3-dioxygenase (282 aa).

Substrate is bound by residues 51–55 (FIIQH), Tyr-113, and Arg-117. His-240 contributes to the heme binding site. Thr-254 serves as a coordination point for substrate.

The protein belongs to the tryptophan 2,3-dioxygenase family. In terms of assembly, homotetramer. It depends on heme as a cofactor.

The catalysed reaction is L-tryptophan + O2 = N-formyl-L-kynurenine. It functions in the pathway amino-acid degradation; L-tryptophan degradation via kynurenine pathway; L-kynurenine from L-tryptophan: step 1/2. Functionally, heme-dependent dioxygenase that catalyzes the oxidative cleavage of the L-tryptophan (L-Trp) pyrrole ring and converts L-tryptophan to N-formyl-L-kynurenine. Catalyzes the oxidative cleavage of the indole moiety. This chain is Tryptophan 2,3-dioxygenase, found in Polaromonas naphthalenivorans (strain CJ2).